We begin with the raw amino-acid sequence, 377 residues long: O-phospho-L-seryl-tRNA:Cys-tRNA synthase (377 aa).

Residues 82-83, asparagine 189, and 212-214 each bind pyridoxal 5'-phosphate; these read AR and SGH. Lysine 215 bears the N6-(pyridoxal phosphate)lysine mark.

This sequence belongs to the SepCysS family. In terms of assembly, homodimer. Interacts with SepRS. Pyridoxal 5'-phosphate serves as cofactor.

The enzyme catalyses O-phospho-L-seryl-tRNA(Cys) + hydrogen sulfide + H(+) = L-cysteinyl-tRNA(Cys) + phosphate. Its function is as follows. Converts O-phospho-L-seryl-tRNA(Cys) (Sep-tRNA(Cys)) to L-cysteinyl-tRNA(Cys) (Cys-tRNA(Cys)). The polypeptide is O-phospho-L-seryl-tRNA:Cys-tRNA synthase (Methanocaldococcus jannaschii (strain ATCC 43067 / DSM 2661 / JAL-1 / JCM 10045 / NBRC 100440) (Methanococcus jannaschii)).